The sequence spans 291 residues: Homoserine kinase (291 aa).

80 to 90 (PLARGLGSSST) serves as a coordination point for ATP.

This sequence belongs to the GHMP kinase family. Homoserine kinase subfamily.

The protein resides in the cytoplasm. It catalyses the reaction L-homoserine + ATP = O-phospho-L-homoserine + ADP + H(+). Its pathway is amino-acid biosynthesis; L-threonine biosynthesis; L-threonine from L-aspartate: step 4/5. In terms of biological role, catalyzes the ATP-dependent phosphorylation of L-homoserine to L-homoserine phosphate. The polypeptide is Homoserine kinase (Lactiplantibacillus plantarum (strain ATCC BAA-793 / NCIMB 8826 / WCFS1) (Lactobacillus plantarum)).